Reading from the N-terminus, the 216-residue chain is TATA-box-binding protein-like 1 (216 aa).

2 repeat units span residues Lys38–Gly121 and Phe126–Gln210.

Belongs to the TBP family.

It localises to the nucleus. Functionally, TATA box-binding transcription factor. Members of the TBP family are differentially required to regulate transcription and development during early embryogenesis. The sequence is that of TATA-box-binding protein-like 1 (trf1) from Entamoeba histolytica (strain ATCC 30459 / HM-1:IMSS / ABRM).